The primary structure comprises 420 residues: Nucleobindin-2 (420 aa).

A signal peptide spans Met-1 to Ala-24. Residues Arg-171 to Pro-223 mediate DNA binding. A disordered region spans residues Thr-194–Ser-225. A binds to necdin region spans residues Lys-213 to Thr-420. EF-hand domains lie at Pro-241 to Lys-276 and Glu-293 to Leu-328. Positions 254, 256, 258, 265, 306, 308, 310, and 317 each coordinate Ca(2+). The short motif at Glu-304–Glu-334 is the GBA element. Ser-332 is modified (phosphoserine). Basic and acidic residues predominate over residues Asp-366–Lys-386. A disordered region spans residues Asp-366 to Thr-420. Positions Gln-387–Leu-396 are enriched in low complexity.

This sequence belongs to the nucleobindin family. Interacts (via GBA motif) with guanine nucleotide-binding protein G(i) alpha subunit GNAI3. Preferentially interacts with inactive rather than active GNAI3. Interaction with GNAI3 is inhibited when NUCB2 binds calcium, probably due to a conformational change which renders the GBA motif inaccessible. Binds to the postmitotic growth suppressor NDN; coexpression abolishes NUCB2 secretion. Interacts with MC4R.

It localises to the golgi apparatus. The protein resides in the endoplasmic reticulum. It is found in the nucleus envelope. The protein localises to the membrane. Its subcellular location is the cytoplasm. It localises to the secreted. Functionally, calcium-binding protein which may have a role in calcium homeostasis. Acts as a non-receptor guanine nucleotide exchange factor which binds to and activates guanine nucleotide-binding protein (G-protein) alpha subunit GNAI3. Its function is as follows. Anorexigenic peptide, seems to play an important role in hypothalamic pathways regulating food intake and energy homeostasis, acting in a leptin-independent manner. May also exert hypertensive roles and modulate blood pressure through directly acting on peripheral arterial resistance. In intestinal epithelial cells, plays a role in the inhibition of hepatic glucose production via MC4R receptor leading to increased cyclic adenosine monophosphate (cAMP) levels and glucagon-like peptide 1 (GLP-1) secretion. This is Nucleobindin-2 (Nucb2) from Rattus norvegicus (Rat).